The primary structure comprises 257 residues: Protein UL133 (257 aa).

2 helical membrane passes run 14 to 34 (WGVP…IWCL) and 45 to 65 (PGIA…AYLI). Positions 149–232 (PTVFVPPPSE…AMPQMPPGVA (84 aa)) are disordered. Residues 164-175 (VIPPQPPTPTSE) are compositionally biased toward pro residues. Residues 179–193 (KKGRAKDKPKGRPKN) show a composition bias toward basic residues. The segment covering 214-228 (GGPPDASPPAMPQMP) has biased composition (pro residues).

It localises to the host Golgi apparatus membrane. This chain is Protein UL133 (UL133), found in Human cytomegalovirus (strain Merlin) (HHV-5).